A 48-amino-acid chain; its full sequence is Protein YodE (48 aa).

The protein is Protein YodE of Escherichia coli (strain K12).